A 447-amino-acid chain; its full sequence is Probable cytosol aminopeptidase (447 aa).

The Mn(2+) site is built by Lys218 and Asp223. Lys230 is an active-site residue. Mn(2+)-binding residues include Asp241, Asp300, and Glu302. The active site involves Arg304.

This sequence belongs to the peptidase M17 family. Mn(2+) is required as a cofactor.

The protein localises to the cytoplasm. It catalyses the reaction Release of an N-terminal amino acid, Xaa-|-Yaa-, in which Xaa is preferably Leu, but may be other amino acids including Pro although not Arg or Lys, and Yaa may be Pro. Amino acid amides and methyl esters are also readily hydrolyzed, but rates on arylamides are exceedingly low.. The enzyme catalyses Release of an N-terminal amino acid, preferentially leucine, but not glutamic or aspartic acids.. Its function is as follows. Presumably involved in the processing and regular turnover of intracellular proteins. Catalyzes the removal of unsubstituted N-terminal amino acids from various peptides. The polypeptide is Probable cytosol aminopeptidase (pepA) (Mycoplasma genitalium (strain ATCC 33530 / DSM 19775 / NCTC 10195 / G37) (Mycoplasmoides genitalium)).